The sequence spans 392 residues: MDKSFILNKTSPRSSARRGQLLTAHGQVETPVFCPVGSQATVKTLTPEDLKSVNVNMILSNTYHLYLRPGIPVVKEMGGLHKFMNWDGVILTDSGGYQIFSLANLRKLDEGGVSFRSHIDGSTRYITPEDAVSFQQDLGSDIAMVLDECPHSEASENEVLAAMERTHQWAKRCLAAHTLKSQHLFAIVQGGLSPVLRQQSAEYLASLDFPGYALGGLSLGEPKDITFETVRHTLRFLPENKPRYLMGVGAPEDLLEGVSCGVDIFDCVLPTRVARNGAFFSRLGRLNIRNASFATQKGPVDPECNCYTCRNYSAAYLHHLFRCEEILAYRLATIHNIAFLSNLMQEVRTSIEKDCFEEFKGDFLTRYQPTNESVRIEQKQKWLSARSGETSS.

Aspartate 93 acts as the Proton acceptor in catalysis. Substrate contacts are provided by residues 93–97, aspartate 147, glutamine 189, and glycine 216; that span reads DSGGY. An RNA binding region spans residues 247-253; it reads GVGAPED. Aspartate 266 serves as the catalytic Nucleophile. The interval 271–275 is RNA binding; important for wobble base 34 recognition; sequence TRVAR. Zn(2+) contacts are provided by cysteine 304, cysteine 306, cysteine 309, and histidine 335.

Belongs to the queuine tRNA-ribosyltransferase family. In terms of assembly, homodimer. Within each dimer, one monomer is responsible for RNA recognition and catalysis, while the other monomer binds to the replacement base PreQ1. Zn(2+) serves as cofactor.

It carries out the reaction 7-aminomethyl-7-carbaguanine + guanosine(34) in tRNA = 7-aminomethyl-7-carbaguanosine(34) in tRNA + guanine. Its pathway is tRNA modification; tRNA-queuosine biosynthesis. Its function is as follows. Catalyzes the base-exchange of a guanine (G) residue with the queuine precursor 7-aminomethyl-7-deazaguanine (PreQ1) at position 34 (anticodon wobble position) in tRNAs with GU(N) anticodons (tRNA-Asp, -Asn, -His and -Tyr). Catalysis occurs through a double-displacement mechanism. The nucleophile active site attacks the C1' of nucleotide 34 to detach the guanine base from the RNA, forming a covalent enzyme-RNA intermediate. The proton acceptor active site deprotonates the incoming PreQ1, allowing a nucleophilic attack on the C1' of the ribose to form the product. After dissociation, two additional enzymatic reactions on the tRNA convert PreQ1 to queuine (Q), resulting in the hypermodified nucleoside queuosine (7-(((4,5-cis-dihydroxy-2-cyclopenten-1-yl)amino)methyl)-7-deazaguanosine). The sequence is that of Queuine tRNA-ribosyltransferase from Dehalococcoides mccartyi (strain ATCC BAA-2266 / KCTC 15142 / 195) (Dehalococcoides ethenogenes (strain 195)).